The sequence spans 279 residues: Probable endonuclease 4 (279 aa).

Zn(2+) contacts are provided by histidine 66, histidine 106, glutamate 142, aspartate 175, histidine 178, histidine 212, aspartate 225, histidine 227, and glutamate 257.

Belongs to the AP endonuclease 2 family. Zn(2+) serves as cofactor.

It catalyses the reaction Endonucleolytic cleavage to 5'-phosphooligonucleotide end-products.. Endonuclease IV plays a role in DNA repair. It cleaves phosphodiester bonds at apurinic or apyrimidinic (AP) sites, generating a 3'-hydroxyl group and a 5'-terminal sugar phosphate. This is Probable endonuclease 4 from Moorella thermoacetica (strain ATCC 39073 / JCM 9320).